A 505-amino-acid polypeptide reads, in one-letter code: Cytochrome P450 monooxygenase iliC (505 aa).

Residues Leu6 to Leu26 traverse the membrane as a helical segment. Cys453 is a heme binding site.

Belongs to the cytochrome P450 family. Heme is required as a cofactor.

Its subcellular location is the membrane. The catalysed reaction is (3E,5S)-3-[(2E,4E,8S,10E,12Z)-1-hydroxy-4,8-dimethyltetradeca-2,4,10,12-tetraen-1-ylidene]-5-[(4-hydroxyphenyl)methyl]pyrrolidine-2,4-dione + reduced [NADPH--hemoprotein reductase] + O2 = 3-[(2E,4E,8S,10E,12Z)-4,8-dimethyltetradeca-2,4,10,12-tetraenoyl]-4-hydroxy-5-(4-hydroxyphenyl)-1,2-dihydropyridin-2-one + oxidized [NADPH--hemoprotein reductase] + 2 H2O. It functions in the pathway mycotoxin biosynthesis. Its function is as follows. Cytochrome P450 monooxygenase; part of the gene cluster that mediates the biosynthesis of ilicicolin H, a 4-hydroxy-2-pyridonealkaloid that has potent and broad antifungal activities by inhibiting the mitochondrial respiration chain. IliC catalyzes the ring expansion of the tetramate intermediate to the acyclic 2-pyridone intermediate that contains the trans bis-diene chain. The biosynthesis of ilicicolin H starts with formation of the tetramic acid by the hybrid PKS-NRPS synthetase iliA with the partnering trans-enoyl reductase iliB since iliA lacks a designated enoylreductase (ER) domain. The cytochrome P450 monooxygenase iliC then catalyzes the ring expansion of the tetramate to the acyclic 2-pyridone. The pericyclase iliD further converts the acyclic 2-pyridone into 8-epi-ilicicolin H. 8-epi-ilicicolin H might then spontaneously convert to ilicicolin H since ilicicolin H is produced in the absence of the epimerase iliE, in contrast to what was observed for the Talaromyces variabilis ilicolin H biosynthetic pathway. This Neonectria sp. (strain DH2) protein is Cytochrome P450 monooxygenase iliC.